Consider the following 332-residue polypeptide: CAX-interacting protein 4 (332 aa).

The tract at residues 33–59 is disordered; the sequence is GYDPYAPTSKEEPKTTQQKTEDPENSY. Positions 41-54 are enriched in basic and acidic residues; that stretch reads SKEEPKTTQQKTED. The CCHC-type zinc finger occupies 81–98; sequence GSCKKCGRVGHLTFQCRN. Residues 124–133 are compositionally biased toward basic and acidic residues; sequence IRRGVGKGEV. The tract at residues 124–332 is disordered; sequence IRRGVGKGEV…RKRHHRKERE (209 aa). A compositionally biased stretch (acidic residues) spans 134–153; that stretch reads EEVSSEEEEESESSDSDVDS. Residues 154–163 are compositionally biased toward basic and acidic residues; that stretch reads EMERIIAERF. 2 stretches are compositionally biased toward basic residues: residues 198–214 and 227–236; these read RKRRRRSMKKRSSHKRR and SKRRKERRGR. A compositionally biased stretch (acidic residues) spans 241–250; sequence DDSDESEDED. Composition is skewed to basic residues over residues 254-269 and 314-332; these read VKRKSRKEKRRRRSRR and SSKRSEKKSRKRHHRKERE.

In terms of assembly, interacts with CAX1. As to expression, expressed in leaves, stems and roots, and at lower levels in flowers.

It localises to the nucleus. Its function is as follows. May regulate CAX1 cation transporter. The sequence is that of CAX-interacting protein 4 (CXIP4) from Arabidopsis thaliana (Mouse-ear cress).